The primary structure comprises 911 residues: Protein translocase subunit SecA (911 aa).

ATP contacts are provided by residues Gln86, 104-108 (GEGKT), and Asp512. Residues Cys895, Cys897, Cys906, and His907 each coordinate Zn(2+).

This sequence belongs to the SecA family. In terms of assembly, monomer and homodimer. Part of the essential Sec protein translocation apparatus which comprises SecA, SecYEG and auxiliary proteins SecDF-YajC and YidC. Requires Zn(2+) as cofactor.

It is found in the cell inner membrane. The protein localises to the cytoplasm. The catalysed reaction is ATP + H2O + cellular proteinSide 1 = ADP + phosphate + cellular proteinSide 2.. Part of the Sec protein translocase complex. Interacts with the SecYEG preprotein conducting channel. Has a central role in coupling the hydrolysis of ATP to the transfer of proteins into and across the cell membrane, serving both as a receptor for the preprotein-SecB complex and as an ATP-driven molecular motor driving the stepwise translocation of polypeptide chains across the membrane. This Bordetella bronchiseptica (strain ATCC BAA-588 / NCTC 13252 / RB50) (Alcaligenes bronchisepticus) protein is Protein translocase subunit SecA.